A 473-amino-acid chain; its full sequence is Photosystem II CP43 reaction center protein (473 aa).

Residues 1–14 constitute a propeptide that is removed on maturation; the sequence is MKTLYSLRRFYPVE. N-acetylthreonine is present on threonine 15. Threonine 15 is modified (phosphothreonine). 5 consecutive transmembrane segments (helical) span residues 69–93, 134–155, 178–200, 255–275, and 291–312; these read LFEV…PHLA, LLGP…KDRN, KALY…RKIT, KPFA…LSYS, and WFNN…ASQA. Glutamate 367 lines the [CaMn4O5] cluster pocket. The helical transmembrane segment at 447 to 471 threads the bilayer; sequence RARAAAAGFEKGIDRDFEPVLSMTP.

This sequence belongs to the PsbB/PsbC family. PsbC subfamily. PSII is composed of 1 copy each of membrane proteins PsbA, PsbB, PsbC, PsbD, PsbE, PsbF, PsbH, PsbI, PsbJ, PsbK, PsbL, PsbM, PsbT, PsbX, PsbY, PsbZ, Psb30/Ycf12, at least 3 peripheral proteins of the oxygen-evolving complex and a large number of cofactors. It forms dimeric complexes. Binds multiple chlorophylls and provides some of the ligands for the Ca-4Mn-5O cluster of the oxygen-evolving complex. It may also provide a ligand for a Cl- that is required for oxygen evolution. PSII binds additional chlorophylls, carotenoids and specific lipids. is required as a cofactor.

The protein localises to the plastid. Its subcellular location is the chloroplast thylakoid membrane. Its function is as follows. One of the components of the core complex of photosystem II (PSII). It binds chlorophyll and helps catalyze the primary light-induced photochemical processes of PSII. PSII is a light-driven water:plastoquinone oxidoreductase, using light energy to abstract electrons from H(2)O, generating O(2) and a proton gradient subsequently used for ATP formation. This is Photosystem II CP43 reaction center protein from Helianthus annuus (Common sunflower).